The chain runs to 630 residues: METTALNSQKAPSVCKDREDCQENSILQKSGPTSAGGVESGQIFNGYSSVPSTGMGDDAEHSVPTATTTLVAEVHHGERETWGKKVDFLLSVIGYAVDLGNIWRFPYVCYQNGGGAFLLPYIIMAIFGGIPLFYMELALGQYHRNGCISIWRKICPIFKGIGYTICIIAFYIASYYNTIIAWALYYLISSFTDRLPWTSCRNSWNTANCTNYFSEDNITWTLHSTSPAEEFYIRHILQIHRSKGLQDVGGVSWQLTLCIMLIFTIIYFSIWKGVKTSGKVVWVTATFPYIVLSVLLVRGATLPGAWKGVLFYLKPNWQKLLETGVWIDAAAQIFFSLGPGFGVLLAFASYNKFNNNCYQDALVTSAVNCMTSFVSGFVIFTVLGYMAEMRSEDVSEVAKDAGPSLLFITYAEAIANMPASTFFAIIFFLMLITLGLDSTFAGLEGVITAVLDEFPHIWAKHREWFVLAVVITCFFGSLTTLTFGGAYVVKLLEEYATGPAVLTVVFIEAIAVSWFYGVTQFCSDVKEMLGFSPGWFWRICWVAVSPVFLLFIICSFLMSPPQLRLFQYSYPHWSVILGYCIGTSSVICIPTYITYRLVTTPGTLKERIIKSITPETPTEIPCGDICLNAV.

Residues 1–87 (METTALNSQK…ERETWGKKVD (87 aa)) lie on the Cytoplasmic side of the membrane. Residue Tyr47 is modified to Phosphotyrosine. A helical membrane pass occupies residues 88–112 (FLLSVIGYAVDLGNIWRFPYVCYQN). Na(+) contacts are provided by Gly94, Ala96, Val97, Asp98, and Asn101. Asp98 contacts serotonin. Over 113 to 115 (GGG) the chain is Extracellular. The chain crosses the membrane as a helical span at residues 116-135 (AFLLPYIIMAIFGGIPLFYM). Residues 136–160 (ELALGQYHRNGCISIWRKICPIFKG) are Cytoplasmic-facing. Tyr142 is subject to Phosphotyrosine. A helical transmembrane segment spans residues 161–186 (IGYTICIIAFYIASYYNTIIAWALYY). At 187–252 (LISSFTDRLP…KGLQDVGGVS (66 aa)) the chain is on the extracellular side. An intrachain disulfide couples Cys200 to Cys209. N-linked (GlcNAc...) asparagine glycosylation is found at Asn208 and Asn217. The chain crosses the membrane as a helical span at residues 253–271 (WQLTLCIMLIFTIIYFSIW). At 272-277 (KGVKTS) the chain is on the cytoplasmic side. Position 276 is a phosphothreonine (Thr276). A helical transmembrane segment spans residues 278-297 (GKVVWVTATFPYIVLSVLLV). Topologically, residues 298 to 324 (RGATLPGAWKGVLFYLKPNWQKLLETG) are extracellular. The helical transmembrane segment at 325–347 (VWIDAAAQIFFSLGPGFGVLLAF) threads the bilayer. Ser336 is a binding site for Na(+). Topologically, residues 348-360 (ASYNKFNNNCYQD) are cytoplasmic. The chain crosses the membrane as a helical span at residues 361–380 (ALVTSAVNCMTSFVSGFVIF). Asn368 provides a ligand contact to Na(+). Residues 381–421 (TVLGYMAEMRSEDVSEVAKDAGPSLLFITYAEAIANMPAST) lie on the Extracellular side of the membrane. A helical transmembrane segment spans residues 422-443 (FFAIIFFLMLITLGLDSTFAGL). Na(+) contacts are provided by Leu434, Asp437, and Ser438. Residue Thr439 participates in serotonin binding. The Cytoplasmic segment spans residues 444–463 (EGVITAVLDEFPHIWAKHRE). A helical membrane pass occupies residues 464–483 (WFVLAVVITCFFGSLTTLTF). Over 484 to 494 (GGAYVVKLLEE) the chain is Extracellular. Serotonin is bound by residues Glu494 and Tyr495. A helical transmembrane segment spans residues 495 to 516 (YATGPAVLTVVFIEAIAVSWFY). The Cytoplasmic segment spans residues 517–538 (GVTQFCSDVKEMLGFSPGWFWR). The helical transmembrane segment at 539–558 (ICWVAVSPVFLLFIICSFLM) threads the bilayer. Residues Phe556 and Ser559 each coordinate serotonin. At 559 to 574 (SPPQLRLFQYSYPHWS) the chain is on the extracellular side. A helical membrane pass occupies residues 575–595 (VILGYCIGTSSVICIPTYITY). Residues 596–630 (RLVTTPGTLKERIIKSITPETPTEIPCGDICLNAV) lie on the Cytoplasmic side of the membrane. The segment at 616–624 (TPTEIPCGD) is interaction with RAB4A.

Belongs to the sodium:neurotransmitter symporter (SNF) (TC 2.A.22) family. SLC6A4 subfamily. In terms of assembly, monomer or homooligomer. Interacts (via C-terminus) with SCAMP2; the interaction is direct and retains transporter molecules intracellularly. Interacts with filamentous actin and STX1A. Interacts (via the N-terminus) with STX1A (via the H3 domain); this interaction regulates SLC4A6 channel conductance. Interacts with SEC23A, SEC24C and PATJ. Interacts with NOS1; the interaction may diminish the cell surface localization of SERT in the brain and, correspondingly, reduce serotonin reuptake. Interacts with TGFB1I1. Interacts with ITGAV:ITGB3. Interacts (via C-terminus) with ITGB3; this interaction regulates SLC6A4 trafficking. Phosphorylation at Thr-276 increases 5-HT uptake and is required for cGMP-mediated SERT regulation. In terms of tissue distribution, expressed in the intestinal crypt epithelial cells (at protein level).

It localises to the cell membrane. The protein localises to the endomembrane system. The protein resides in the endosome membrane. Its subcellular location is the synapse. It is found in the cell junction. It localises to the focal adhesion. The protein localises to the cell projection. The protein resides in the neuron projection. The catalysed reaction is serotonin(out) + K(+)(in) + Na(+)(out) + H(+)(in) = serotonin(in) + K(+)(out) + Na(+)(in) + H(+)(out). Its function is as follows. Serotonin transporter that cotransports serotonin with one Na(+) ion in exchange for one K(+) ion and possibly one proton in an overall electroneutral transport cycle. Transports serotonin across the plasma membrane from the extracellular compartment to the cytosol thus limiting serotonin intercellular signaling. Essential for serotonin homeostasis in the central nervous system. In the developing somatosensory cortex, acts in glutamatergic neurons to control serotonin uptake and its trophic functions accounting for proper spatial organization of cortical neurons and elaboration of sensory circuits. In the mature cortex, acts primarily in brainstem raphe neurons to mediate serotonin uptake from the synaptic cleft back into the pre-synaptic terminal thus terminating serotonin signaling at the synapse. Modulates mucosal serotonin levels in the gastrointestinal tract through uptake and clearance of serotonin in enterocytes. Required for enteric neurogenesis and gastrointestinal reflexes. Regulates blood serotonin levels by ensuring rapid high affinity uptake of serotonin from plasma to platelets, where it is further stored in dense granules via vesicular monoamine transporters and then released upon stimulation. Mechanistically, the transport cycle starts with an outward-open conformation having Na1(+) and Cl(-) sites occupied. The binding of a second extracellular Na2(+) ion and serotonin substrate leads to structural changes to outward-occluded to inward-occluded to inward-open, where the Na2(+) ion and serotonin are released into the cytosol. Binding of intracellular K(+) ion induces conformational transitions to inward-occluded to outward-open and completes the cycle by releasing K(+) possibly together with a proton bound to Asp-98 into the extracellular compartment. Na1(+) and Cl(-) ions remain bound throughout the transport cycle. Additionally, displays serotonin-induced channel-like conductance for monovalent cations, mainly Na(+) ions. The channel activity is uncoupled from the transport cycle and may contribute to the membrane resting potential or excitability. The protein is Sodium-dependent serotonin transporter (SLC6A4) of Cavia porcellus (Guinea pig).